The chain runs to 335 residues: Lipase chaperone (335 aa).

Residues 7–23 (LLPLAIALGLGFFIARP) traverse the membrane as a helical segment.

Belongs to the lipase chaperone family.

The protein resides in the cell inner membrane. In terms of biological role, may be involved in the folding of the extracellular lipase during its passage through the periplasm. In Ectopseudomonas mendocina (Pseudomonas mendocina), this protein is Lipase chaperone (lifO).